The primary structure comprises 472 residues: Ribosomal RNA small subunit methyltransferase F (472 aa).

Residues 123–129 (AAAPGSK), E147, D174, and D192 each bind S-adenosyl-L-methionine. The active-site Nucleophile is C245.

Belongs to the class I-like SAM-binding methyltransferase superfamily. RsmB/NOP family.

The protein localises to the cytoplasm. The catalysed reaction is cytidine(1407) in 16S rRNA + S-adenosyl-L-methionine = 5-methylcytidine(1407) in 16S rRNA + S-adenosyl-L-homocysteine + H(+). Functionally, specifically methylates the cytosine at position 1407 (m5C1407) of 16S rRNA. In Vibrio vulnificus (strain CMCP6), this protein is Ribosomal RNA small subunit methyltransferase F.